Consider the following 198-residue polypeptide: Nucleoid occlusion factor SlmA (198 aa).

The 61-residue stretch at 10–70 folds into the HTH tetR-type domain; it reads NRREEILQSL…SLIEFIEDSL (61 aa). A DNA-binding region (H-T-H motif) is located at residues 33 to 52; the sequence is TTAKLAASVGVSEAALYRHF. Residues 117–144 adopt a coiled-coil conformation; the sequence is EQDRLQGRINQLFERIEAQLRQVLREKR.

It belongs to the nucleoid occlusion factor SlmA family. As to quaternary structure, homodimer. Interacts with FtsZ.

Its subcellular location is the cytoplasm. It localises to the nucleoid. Its function is as follows. Required for nucleoid occlusion (NO) phenomenon, which prevents Z-ring formation and cell division over the nucleoid. Acts as a DNA-associated cell division inhibitor that binds simultaneously chromosomal DNA and FtsZ, and disrupts the assembly of FtsZ polymers. SlmA-DNA-binding sequences (SBS) are dispersed on non-Ter regions of the chromosome, preventing FtsZ polymerization at these regions. The sequence is that of Nucleoid occlusion factor SlmA from Salmonella dublin (strain CT_02021853).